We begin with the raw amino-acid sequence, 215 residues long: Redox-sensing transcriptional repressor Rex (215 aa).

Residues 18–57 (LYHRYLKYLDESGKERVSSAELSEAVKVDSATIRRDFSYF) constitute a DNA-binding region (H-T-H motif). 92-97 (GVGNLG) serves as a coordination point for NAD(+).

Belongs to the transcriptional regulatory Rex family. In terms of assembly, homodimer.

It localises to the cytoplasm. Functionally, modulates transcription in response to changes in cellular NADH/NAD(+) redox state. The sequence is that of Redox-sensing transcriptional repressor Rex from Listeria innocua serovar 6a (strain ATCC BAA-680 / CLIP 11262).